Consider the following 20-residue polypeptide: Dahlein-5.1 (20 aa).

Expressed by the skin dorsal glands.

The protein localises to the secreted. Has no antimicrobial activity. Strongly inhibits the formation of NO by neuronal nitric oxide synthase at micromolar concentrations. Acts by a non-competitive mechanism, probably by binding to calcium/calmodulin and as a consequence blocking calmodulin attachment to nNOS. The polypeptide is Dahlein-5.1 (Ranoidea dahlii (Dahl's aquatic frog)).